Reading from the N-terminus, the 85-residue chain is Conotoxin Mi15a (85 aa).

An N-terminal signal peptide occupies residues 1–23 (MEKLTVLILVATVLLTIQVLGQS). A propeptide spanning residues 24 to 49 (DRDKHLKRRPKQYATKRLSARMRGHR) is cleaved from the precursor. The residue at position 50 (Gln-50) is a Pyrrolidone carboxylic acid.

Belongs to the conotoxin O2 superfamily. Contains 4 disulfide bonds. Expressed by the venom duct.

Its subcellular location is the secreted. The polypeptide is Conotoxin Mi15a (Conus miles (Soldier cone)).